We begin with the raw amino-acid sequence, 157 residues long: 2-C-methyl-D-erythritol 2,4-cyclodiphosphate synthase (157 aa).

2 residues coordinate a divalent metal cation: Asp-8 and His-10. 4-CDP-2-C-methyl-D-erythritol 2-phosphate is bound by residues 8-10 (DVH) and 34-35 (HS). His-42 contributes to the a divalent metal cation binding site. 4-CDP-2-C-methyl-D-erythritol 2-phosphate contacts are provided by residues 56–58 (DIG), 61–65 (FPDTD), 100–106 (AQAPKMA), 132–135 (TTTE), Phe-139, and Arg-142.

This sequence belongs to the IspF family. As to quaternary structure, homotrimer. A divalent metal cation serves as cofactor.

It catalyses the reaction 4-CDP-2-C-methyl-D-erythritol 2-phosphate = 2-C-methyl-D-erythritol 2,4-cyclic diphosphate + CMP. Its pathway is isoprenoid biosynthesis; isopentenyl diphosphate biosynthesis via DXP pathway; isopentenyl diphosphate from 1-deoxy-D-xylulose 5-phosphate: step 4/6. Involved in the biosynthesis of isopentenyl diphosphate (IPP) and dimethylallyl diphosphate (DMAPP), two major building blocks of isoprenoid compounds. Catalyzes the conversion of 4-diphosphocytidyl-2-C-methyl-D-erythritol 2-phosphate (CDP-ME2P) to 2-C-methyl-D-erythritol 2,4-cyclodiphosphate (ME-CPP) with a corresponding release of cytidine 5-monophosphate (CMP). The polypeptide is 2-C-methyl-D-erythritol 2,4-cyclodiphosphate synthase (Pseudomonas aeruginosa (strain ATCC 15692 / DSM 22644 / CIP 104116 / JCM 14847 / LMG 12228 / 1C / PRS 101 / PAO1)).